The chain runs to 467 residues: Replication factor A 51 kDa subunit (467 aa).

The OB DNA-binding region spans tryptophan 23–threonine 105. The C4-type zinc-finger motif lies at cysteine 313–cysteine 335.

It belongs to the replication factor A protein 1 family. Component of the heterotrimeric canonical replication protein A complex (RPA). In terms of processing, the N-terminus is blocked.

The protein localises to the nucleus. Its function is as follows. As part of the heterotrimeric replication protein A complex (RPA/RP-A), binds and stabilizes single-stranded DNA intermediates, that form during DNA replication or upon DNA stress. It prevents their reannealing and in parallel, recruits and activates different proteins and complexes involved in DNA metabolism. Thereby, it plays an essential role both in DNA replication and the cellular response to DNA damage. This is Replication factor A 51 kDa subunit (RPA1) from Crithidia fasciculata.